The sequence spans 40 residues: Photosystem II reaction center protein J (40 aa).

A helical membrane pass occupies residues 8 to 28 (IPLWLIGTVTGIAVIGLIGVF).

Belongs to the PsbJ family. PSII is composed of 1 copy each of membrane proteins PsbA, PsbB, PsbC, PsbD, PsbE, PsbF, PsbH, PsbI, PsbJ, PsbK, PsbL, PsbM, PsbT, PsbX, PsbY, PsbZ, Psb30/Ycf12, at least 3 peripheral proteins of the oxygen-evolving complex and a large number of cofactors. It forms dimeric complexes.

Its subcellular location is the plastid. The protein resides in the chloroplast thylakoid membrane. In terms of biological role, one of the components of the core complex of photosystem II (PSII). PSII is a light-driven water:plastoquinone oxidoreductase that uses light energy to abstract electrons from H(2)O, generating O(2) and a proton gradient subsequently used for ATP formation. It consists of a core antenna complex that captures photons, and an electron transfer chain that converts photonic excitation into a charge separation. The protein is Photosystem II reaction center protein J of Oryza nivara (Indian wild rice).